A 566-amino-acid chain; its full sequence is Alpha-N-acetylgalactosaminide alpha-2,6-sialyltransferase 1 (566 aa).

Topologically, residues 1 to 16 (MGFLIRRLPKDSRIFR) are cytoplasmic. The helical; Signal-anchor for type II membrane protein transmembrane segment at 17-37 (WLLILTVFSFIITSFSALFGM) threads the bilayer. At 38-566 (EKSIFRQLKI…ENIMKLYQRS (529 aa)) the chain is on the lumenal side. N66 and N132 each carry an N-linked (GlcNAc...) asparagine glycan. A disordered region spans residues 138–161 (ASVVERTKEKTTARPVPGVGEADG). The N-linked (GlcNAc...) asparagine glycan is linked to N192. The stretch at 247–254 (SSSPVSTC) is repeat 1. The interval 247–337 (SSSPVSTCSE…ANSSSNVSTC (91 aa)) is 2 X 8 AA repeats of S-S-S-X-V-S-T-C. 2 cysteine pairs are disulfide-bonded: C254–C337 and C340–C508. Residues N275, N286, N306, N329, and N333 are each glycosylated (N-linked (GlcNAc...) asparagine). Copy 2 of the repeat occupies 330–337 (SSSNVSTC).

The protein belongs to the glycosyltransferase 29 family. As to expression, heart, kidney, testes, brain, liver and lung.

It is found in the golgi apparatus membrane. It carries out the reaction a beta-D-galactosyl-(1-&gt;3)-N-acetyl-alpha-D-galactosaminyl derivative + CMP-N-acetyl-beta-neuraminate = a beta-D-galactosyl-(1-&gt;3)-[N-acetyl-alpha-neuraminyl-(2-&gt;6)]-N-acetyl-alpha-D-galactosaminyl derivative + CMP + H(+). The catalysed reaction is a 3-O-[N-acetyl-alpha-D-galactosaminyl]-L-seryl-[protein] + CMP-N-acetyl-beta-neuraminate = a 3-O-[N-acetyl-alpha-neuraminosyl-(2-&gt;6)-N-acetyl-alpha-D-galactosaminyl]-L-seryl-[protein] + CMP + H(+). The enzyme catalyses a 3-O-[N-acetyl-alpha-D-galactosaminyl]-L-threonyl-[protein] + CMP-N-acetyl-beta-neuraminate = a 3-O-[N-acetyl-alpha-neuraminosyl-(2-&gt;6)-N-acetyl-alpha-D-galactosaminyl]-L-threonyl-[protein] + CMP + H(+). It catalyses the reaction a 3-O-[beta-D-galactosyl-(1-&gt;3)-N-acetyl-alpha-D-galactosaminyl]-L-seryl-[protein] + CMP-N-acetyl-beta-neuraminate = a 3-O-{beta-D-galactosyl-(1-&gt;3)-[N-acetyl-alpha-neuraminosyl-(2-&gt;6)]-N-acetyl-alpha-D-galactosaminyl}-L-seryl-[protein] + CMP + H(+). It carries out the reaction a 3-O-[beta-D-galactosyl-(1-&gt;3)-N-acetyl-alpha-D-galactosaminyl]-L-threonyl-[protein] + CMP-N-acetyl-beta-neuraminate = a 3-O-{beta-D-galactosyl-(1-&gt;3)-[N-acetyl-alpha-neuraminosyl-(2-&gt;6)]-N-acetyl-alpha-D-galactosaminyl}-L-threonyl-[protein] + CMP + H(+). The catalysed reaction is a 3-O-[N-acetyl-alpha-neuraminyl-(2-&gt;3)-beta-D-galactosyl-(1-&gt;3)-N-acetyl-alpha-D-galactosaminyl]-L-threonyl-[protein] + CMP-N-acetyl-beta-neuraminate = a 3-O-{alpha-Neu5Ac-(2-&gt;3)-beta-D-Gal-(1-&gt;3)-[alpha-Neu5Ac-(2-&gt;6)]-alpha-D-GalNAc}-L-threonyl-[protein] + CMP + H(+). It functions in the pathway protein modification; protein glycosylation. Its function is as follows. Protein sialyltransferase specifically expressed in goblet cells that plays a key role in intestinal host-commensal homeostasis. Conjugates sialic acid with an alpha-2-6 linkage to N-acetylgalactosamine (GalNAc) glycan chains linked to serine or threonine in glycoproteins. Generates sialylated T and Tn antigens.. The polypeptide is Alpha-N-acetylgalactosaminide alpha-2,6-sialyltransferase 1 (ST6GALNAC1) (Gallus gallus (Chicken)).